The following is a 220-amino-acid chain: Iron-sulfur cluster repair protein YtfE (220 aa).

This sequence belongs to the RIC family. YtfE subfamily. In terms of assembly, homodimer.

The protein resides in the cytoplasm. In terms of biological role, di-iron-containing protein involved in the repair of iron-sulfur clusters damaged by oxidative and nitrosative stress conditions. This is Iron-sulfur cluster repair protein YtfE from Escherichia coli O6:K15:H31 (strain 536 / UPEC).